The primary structure comprises 357 residues: Peptide chain release factor 1 (357 aa).

An N5-methylglutamine modification is found at Gln-234.

It belongs to the prokaryotic/mitochondrial release factor family. Methylated by PrmC. Methylation increases the termination efficiency of RF1.

It is found in the cytoplasm. Functionally, peptide chain release factor 1 directs the termination of translation in response to the peptide chain termination codons UAG and UAA. This Nocardioides sp. (strain ATCC BAA-499 / JS614) protein is Peptide chain release factor 1.